A 485-amino-acid polypeptide reads, in one-letter code: Putative phosphoethanolamine transferase HI_1064 (485 aa).

The next 4 membrane-spanning stretches (helical) occupy residues 33–53, 55–75, 81–101, and 125–145; these read ILPA…ILIG, GMFT…ILLL, SFYF…PTGL, and FLLQ…ILIF.

Belongs to the phosphoethanolamine transferase family.

Its subcellular location is the cell membrane. This is Putative phosphoethanolamine transferase HI_1064 from Haemophilus influenzae (strain ATCC 51907 / DSM 11121 / KW20 / Rd).